The following is a 650-amino-acid chain: Threonine--tRNA ligase (650 aa).

Positions 1–66 constitute a TGS domain; it reads MVQITLPDGS…EHDAQLAIVT (66 aa). The interval 247-538 is catalytic; it reads DHRKIGRDLD…LIENHAGAMP (292 aa). Zn(2+)-binding residues include Cys-338, His-389, and His-515.

The protein belongs to the class-II aminoacyl-tRNA synthetase family. Homodimer. Zn(2+) serves as cofactor.

It localises to the cytoplasm. The enzyme catalyses tRNA(Thr) + L-threonine + ATP = L-threonyl-tRNA(Thr) + AMP + diphosphate + H(+). In terms of biological role, catalyzes the attachment of threonine to tRNA(Thr) in a two-step reaction: L-threonine is first activated by ATP to form Thr-AMP and then transferred to the acceptor end of tRNA(Thr). Also edits incorrectly charged L-seryl-tRNA(Thr). The chain is Threonine--tRNA ligase from Bordetella petrii (strain ATCC BAA-461 / DSM 12804 / CCUG 43448).